Here is a 204-residue protein sequence, read N- to C-terminus: COBRA-like protein 5 (204 aa).

Residues Met1–Ala24 form the signal peptide. Residues Asn31 and Asn195 are each glycosylated (N-linked (GlcNAc...) asparagine).

This sequence belongs to the COBRA family. In terms of tissue distribution, expressed in roots, stems, leaves, flowers and siliques.

The polypeptide is COBRA-like protein 5 (COBL5) (Arabidopsis thaliana (Mouse-ear cress)).